We begin with the raw amino-acid sequence, 102 residues long: Small ribosomal subunit protein uS10 (102 aa).

Belongs to the universal ribosomal protein uS10 family. Part of the 30S ribosomal subunit.

Its function is as follows. Involved in the binding of tRNA to the ribosomes. This is Small ribosomal subunit protein uS10 from Malacoplasma penetrans (strain HF-2) (Mycoplasma penetrans).